Consider the following 120-residue polypeptide: MDYEFLRDITGVVKVRMSMDHEAIGHWFNEEVKGNLALLDEVEQAARTVKGSERSWQRAGHEYTLWLDGEEVMIRANQLEFSGDEIEEGMSYYDEESLSLCGVEDFLQVVAAYREFMQQR.

The protein belongs to the UPF0231 family.

The chain is UPF0231 protein KPN78578_01240 from Klebsiella pneumoniae subsp. pneumoniae (strain ATCC 700721 / MGH 78578).